We begin with the raw amino-acid sequence, 72 residues long: UPF0270 protein YheU (72 aa).

Belongs to the UPF0270 family.

The sequence is that of UPF0270 protein YheU from Salmonella choleraesuis (strain SC-B67).